We begin with the raw amino-acid sequence, 917 residues long: Nitrate reductase [NADH] 1 (917 aa).

Residues 62 to 81 (DSYDDSSSDDEDESHNRNVP) form a disordered region. Residues 63-74 (SYDDSSSDDEDE) are compositionally biased toward acidic residues. Cys197 is a Mo-molybdopterin binding site. In terms of domain architecture, Cytochrome b5 heme-binding spans 545–620 (SKMYSISEVR…LEDYRIGELI (76 aa)). His580 and His603 together coordinate heme. One can recognise an FAD-binding FR-type domain in the interval 660-772 (REKIPVRLIE…KGPLGHIEYK (113 aa)). Residues 712–715 (RAYT), 729–733 (VVKVY), Phe734, Phe741, 746–748 (LMS), and Thr799 contribute to the FAD site.

This sequence belongs to the nitrate reductase family. As to quaternary structure, homodimer. FAD is required as a cofactor. The cofactor is heme. Requires Mo-molybdopterin as cofactor. Root, leaf, and shoot.

The enzyme catalyses nitrite + NAD(+) + H2O = nitrate + NADH + H(+). Functionally, nitrate reductase is a key enzyme involved in the first step of nitrate assimilation in plants, fungi and bacteria. The chain is Nitrate reductase [NADH] 1 (NIA1) from Arabidopsis thaliana (Mouse-ear cress).